A 247-amino-acid chain; its full sequence is UPF0309 protein GWCH70_1414 (247 aa).

The 184-residue stretch at 31–214 folds into the SIS domain; the sequence is VSEAIQKGGI…VLMAENGFEP (184 aa).

This sequence belongs to the UPF0309 family.

This Geobacillus sp. (strain WCH70) protein is UPF0309 protein GWCH70_1414.